We begin with the raw amino-acid sequence, 97 residues long: MSVNIKPLEDRIVVKPLDAEQTTASGLVIPDTAKEKPQEGEVLAIGPGRIDDNGNRVPLDVTVGDKVIYSKYGGTEVKYAGEEYLILSARDVLAVVS.

It belongs to the GroES chaperonin family. As to quaternary structure, heptamer of 7 subunits arranged in a ring. Interacts with the chaperonin GroEL.

The protein localises to the cytoplasm. Functionally, together with the chaperonin GroEL, plays an essential role in assisting protein folding. The GroEL-GroES system forms a nano-cage that allows encapsulation of the non-native substrate proteins and provides a physical environment optimized to promote and accelerate protein folding. GroES binds to the apical surface of the GroEL ring, thereby capping the opening of the GroEL channel. In Nocardioides sp. (strain ATCC BAA-499 / JS614), this protein is Co-chaperonin GroES.